The sequence spans 96 residues: Neurotoxin 23 (96 aa).

The signal sequence occupies residues 1-22; that stretch reads MKNIVIIITVAVLFNLFGESLQ. Residues 26–89 enclose the LCN-type CS-alpha/beta domain; that stretch reads FETYPLNQDD…FLAEIIDTCN (64 aa). Intrachain disulfides connect C40/C63, C49/C68, and C53/C70.

The protein belongs to the long (3 C-C) scorpion toxin superfamily. In terms of tissue distribution, expressed by the venom gland.

The protein resides in the secreted. The sequence is that of Neurotoxin 23 from Lychas mucronatus (Chinese swimming scorpion).